A 249-amino-acid chain; its full sequence is Serine 3-dehydrogenase (249 aa).

Position 6 to 30 (6 to 30 (LITGATSGFGQATAQRFVKEGWKVI)) interacts with NADP(+). Residue S135 participates in substrate binding. Y148 (proton acceptor) is an active-site residue.

The protein belongs to the short-chain dehydrogenases/reductases (SDR) family. Homotetramer.

It catalyses the reaction L-serine + NADP(+) = aminoacetaldehyde + CO2 + NADPH. Catalyzes the oxidation of the hydroxyl group of serine to form 2-aminomalonate semialdehyde which is spontaneously converted into 2-aminoacetaldehyde and CO(2). Also acts on D-serine, L-glycerate, D-glycerate and 2-methyl-DL-serine. Does not act on O-methyl-DL-serine and L-threonine. The sequence is that of Serine 3-dehydrogenase (sdh) from Rhizobium radiobacter (Agrobacterium tumefaciens).